The chain runs to 209 residues: uncharacterized protein (209 aa).

Positions 1–17 (MKRLVTGLLALSLFLAA) are cleaved as a signal peptide. Residues 17–105 (ACGQDSDQQK…SNNQANNNQK (89 aa)) are disordered. Residue cysteine 18 is the site of N-palmitoyl cysteine attachment. A lipid anchor (S-diacylglycerol cysteine) is attached at cysteine 18. Basic and acidic residues predominate over residues 23 to 70 (DQQKDSNKEKDDKAKTEQQDEKTNDSSKDKKDKKDDSKDVNKDNKDNS). The segment covering 71-105 (ANDNQQQSNSNATNNDQNQTNNNQSSNNQANNNQK) has biased composition (low complexity).

Its subcellular location is the cell membrane. This is an uncharacterized protein from Staphylococcus aureus (strain bovine RF122 / ET3-1).